We begin with the raw amino-acid sequence, 153 residues long: uncharacterized protein (153 aa).

Residues Leu72–Ser98 form a disordered region.

The protein localises to the cytoplasm. It is found in the nucleus. This is an uncharacterized protein from Schizosaccharomyces pombe (strain 972 / ATCC 24843) (Fission yeast).